The primary structure comprises 510 residues: MVNQAFMLWCYITPVLGAVVAEQYIGRVKTIIFSSSVYLCGLVTLFLSSLPTAYAMGISLPGLLVSLFLIGIGTGGIKTNVSSLIAEQYTGPKESRRILKSGEEVIVDRDLTIQRIFTTFFLYINIGSFSPLLITIIEKEYGFSAAFSLSAITFSIGFIIVLVSRHLYISRDPDSSIIFNACKAFWIAIKHKGNLDYARPSYQTEQAATRRLSWDDSFIDDLRRAIASCKIFILYPIYWAAYSQFLTNFISQAATMETHGVPNDIMTNIDPITVLILLPVLDRIVFPFLRRQGVPVRHVDRITIGMPDFQPFVQESYQICQRTCFQIISAIELGLGLQAGRLTQCCQPAASEIRLLYYPPTTKNLFDEGLKKRAWPHTDLGIITLLFQDMVGGLEVEDRAAGKPRSFIPVKRVSPNEMIVNTSDSLQRWTNNVIRAGLHQVTAPDAAKLSNGVDMLPARCSSVFFFKAGRDTSVGPLPEFVTEDRPAAFEDMTALQYQQLKTRILHGVEG.

The next 3 membrane-spanning stretches (helical) occupy residues 1-21, 31-51, and 57-77; these read MVNQ…AVVA, IIFS…SSLP, and GISL…TGGI. A glycan (N-linked (GlcNAc...) asparagine) is linked at Asn80. The next 4 membrane-spanning stretches (helical) occupy residues 116–136, 143–163, 231–251, and 269–289; these read IFTT…LITI, FSAA…IVLV, IFIL…NFIS, and IDPI…FPFL. In terms of domain architecture, Fe2OG dioxygenase spans 348–468; it reads PAASEIRLLY…RCSSVFFFKA (121 aa). Fe cation is bound by residues His377 and Asp379. N-linked (GlcNAc...) asparagine glycosylation is present at Asn421. His439 serves as a coordination point for Fe cation. Arg459 contacts 2-oxoglutarate.

This sequence belongs to the major facilitator superfamily. Proton-dependent oligopeptide transporter (POT/PTR) (TC 2.A.17) family.

It is found in the membrane. Functionally, peptide transporter; part of the gene cluster that mediates the biosynthesis of imizoquins A to D, tripeptide-derived alkaloids that serve a protective role against oxidative stress that are essential for normal germination. This Aspergillus flavus (strain ATCC 200026 / FGSC A1120 / IAM 13836 / NRRL 3357 / JCM 12722 / SRRC 167) protein is Peptide transporter imqJ.